A 430-amino-acid chain; its full sequence is Glutamate-1-semialdehyde 2,1-aminomutase (430 aa).

At Lys267 the chain carries N6-(pyridoxal phosphate)lysine.

It belongs to the class-III pyridoxal-phosphate-dependent aminotransferase family. HemL subfamily. In terms of assembly, homodimer. Pyridoxal 5'-phosphate serves as cofactor.

It is found in the cytoplasm. The catalysed reaction is (S)-4-amino-5-oxopentanoate = 5-aminolevulinate. It functions in the pathway porphyrin-containing compound metabolism; protoporphyrin-IX biosynthesis; 5-aminolevulinate from L-glutamyl-tRNA(Glu): step 2/2. This chain is Glutamate-1-semialdehyde 2,1-aminomutase, found in Cytophaga hutchinsonii (strain ATCC 33406 / DSM 1761 / CIP 103989 / NBRC 15051 / NCIMB 9469 / D465).